Reading from the N-terminus, the 73-residue chain is Antimicrobial peptide TsAP-2 (73 aa).

A signal peptide spans 1-22 (MQIKHLITIFFLVLIVADHCHA). Lys39 is subject to Lysine amide. Residues 45 to 73 (EITSQIEQYRNLQKREAELENLLANLPVY) constitute a propeptide that is removed on maturation.

It belongs to the non-disulfide-bridged peptide (NDBP) superfamily. Short antimicrobial peptide (group 4) family. Expressed by the venom gland.

The protein resides in the secreted. In terms of biological role, antimicrobial peptide. Has a high antibacterial activity against the Gram-positive bacterium S.aureus (MIC=5-17.30 uM), the methicillin-resistant S.aureus (MRSA) (MIC=17.30 uM), and E.faecalis (MIC=69.23 uM). Has antifungal activity against Candida spp. and one Cryptococcus neoformans strains with MICs values ranging from 6.25 to 100 uM. Also shows an inhibitory activity on C.albicans biofilms at high concentrations. Has a moderate hemolytic potency (18% at 20 uM). Also inhibits the growth of the five human cancer cell lines tested (the squamous carcinoma cell line H157 (IC(50)=4.1 uM), the lung adenocarcinoma cell line H838 (11.0 uM), the breast carcinoma cell line MCF-7 (6.4 uM), the androgen-independent prostate adenocarcinoma cell line PC3 (13.3 uM) and the glioblastoma cell line U251-MG (15.4 uM)). In the model of polymicrobial sepsis, it exhibits an antibiotic effect, reducing the levels of microorganisms in the infectious focus and the inflammatory responses in the lung and cecum of septic animals. The sequence is that of Antimicrobial peptide TsAP-2 from Tityus serrulatus (Brazilian scorpion).